The sequence spans 186 residues: UPF0301 protein LHK_02881 (186 aa).

Belongs to the UPF0301 (AlgH) family.

The polypeptide is UPF0301 protein LHK_02881 (Laribacter hongkongensis (strain HLHK9)).